A 408-amino-acid polypeptide reads, in one-letter code: MNYELLTTENAPVKMWTKGVPVEADARQQLINTAKMPFIFKHIAVMPDVHLGKGSTIGSVIPTKGAIIPAAVGVDIGCGMNALRTALTAEDLPENLAELRQAIETAVPHGRTTGRCKRDKGAWENPPVNVDAKWAELEAGYQWLTQKYPRFLNTNNYKHLGTLGTGNHFIEICLDESDQVWIMLHSGSRGIGNAIGTYFIDLAQKEMQETLETLPSRDLAYFMEGTEYFDDYLKAVAWAQLFASLNRDAMMENVVTALQSITQKTVRQPQTLAMEEINCHHNYVQKEQHFGEEIYVTRKGAVSARAGQYGIIPGSMGAKSFIVRGLGNEESFCSCSHGAGRVMSRTKAKKLFSVEDQIRATAHVECRKDAEVIDEIPMAYKDIDAVMAAQSDLVEVIYTLRQVVCVKG.

Mn(2+) is bound by residues Asp75, Cys78, His168, His185, and His281. A GMP-binding site is contributed by 167-171; it reads NHFIE. GMP-binding positions include 281-282, 313-316, Ser320, 337-340, and Lys407; these read HN, PGSM, and HGAG. His337 functions as the GMP-histidine intermediate in the catalytic mechanism.

It belongs to the RtcB family. As to quaternary structure, monomer. Requires Mn(2+) as cofactor.

It carries out the reaction a 3'-end 3'-phospho-ribonucleotide-RNA + a 5'-end dephospho-ribonucleoside-RNA + GTP = a ribonucleotidyl-ribonucleotide-RNA + GMP + diphosphate. The catalysed reaction is a 3'-end 2',3'-cyclophospho-ribonucleotide-RNA + a 5'-end dephospho-ribonucleoside-RNA + GTP + H2O = a ribonucleotidyl-ribonucleotide-RNA + GMP + diphosphate + H(+). Functionally, GTP-dependent RNA ligase that is involved in RNA repair. Joins RNA with 2',3'-cyclic-phosphate or 3'-phosphate ends to RNA with 5'-hydroxy ends. Also acts as a DNA ligase in case of DNA damage by splicing 'dirty' DNA breaks, characterized by 3'-phosphate (or cyclic-phosphate) and 5'-hydroxy ends that cannot be sealed by classical DNA ligases. Repairs tRNA cleaved by colicins D or E5, does not repair damaged 16S rRNA. Its function is as follows. Able to catalyze tRNA splicing in vivo in yeast, but bacteria are not known to splice tRNA. The protein is RNA-splicing ligase RtcB of Escherichia coli (strain K12).